A 191-amino-acid polypeptide reads, in one-letter code: Phosphoheptose isomerase (191 aa).

In terms of domain architecture, SIS spans 37 to 191; it reads IAESFKQDGK…IIQLIEKEME (155 aa). 52 to 54 lines the substrate pocket; it reads NGG. Residues His61 and Glu65 each coordinate Zn(2+). Substrate-binding positions include Glu65, 93–94, 119–121, Ser124, and Gln172; these read ND and STS. Gln172 and His180 together coordinate Zn(2+).

Belongs to the SIS family. GmhA subfamily. Homotetramer. Requires Zn(2+) as cofactor.

It is found in the cytoplasm. It catalyses the reaction 2 D-sedoheptulose 7-phosphate = D-glycero-alpha-D-manno-heptose 7-phosphate + D-glycero-beta-D-manno-heptose 7-phosphate. The protein operates within carbohydrate biosynthesis; D-glycero-D-manno-heptose 7-phosphate biosynthesis; D-glycero-alpha-D-manno-heptose 7-phosphate and D-glycero-beta-D-manno-heptose 7-phosphate from sedoheptulose 7-phosphate: step 1/1. It participates in bacterial outer membrane biogenesis; LPS core biosynthesis. Functionally, catalyzes the isomerization of sedoheptulose 7-phosphate in D-glycero-D-manno-heptose 7-phosphate. This Vibrio vulnificus (strain CMCP6) protein is Phosphoheptose isomerase.